The chain runs to 247 residues: Carboxy-S-adenosyl-L-methionine synthase (247 aa).

Residues Tyr-39, 64-66, 89-90, 117-118, Asn-132, and Arg-199 contribute to the S-adenosyl-L-methionine site; these read GCS, DN, and DI.

Belongs to the class I-like SAM-binding methyltransferase superfamily. Cx-SAM synthase family. Homodimer.

The enzyme catalyses prephenate + S-adenosyl-L-methionine = carboxy-S-adenosyl-L-methionine + 3-phenylpyruvate + H2O. In terms of biological role, catalyzes the conversion of S-adenosyl-L-methionine (SAM) to carboxy-S-adenosyl-L-methionine (Cx-SAM). In Salmonella enteritidis PT4 (strain P125109), this protein is Carboxy-S-adenosyl-L-methionine synthase.